Here is a 353-residue protein sequence, read N- to C-terminus: MDEAETDATENKRASEAKRASAMPPPPPPPPPISPPALIPAPAAGEEGPASLGQAGAAGCSRSRPPALEPERSLGRLRGRFEDYDEELEEEEEMEEEEEEEEEMSHFSLRLESGRADSEDEEERLINLVELTPYILCSICKGYLIDATTITECLHTFCKSCIVRHFYYSNRCPKCNIVVHQTQPLYNIRLDRQLQDIVYKLVINLEEREKKQMHDFYKERGLEVPKPAAPQPVPSSKGKTKKVLESVFRIPPELDMSLLLEFIGANEDTGHFKPLEKKFVRVSGEATIGHVEKFLRRKMGLDPACQVDIICGDHLLERYQTLREIRRAIGDTAMQDGLLVLHYGLVVSPLKIT.

Positions 1–116 are disordered; that stretch reads MDEAETDATE…FSLRLESGRA (116 aa). Positions 9-19 are enriched in basic and acidic residues; it reads TENKRASEAKR. Residues 23-39 show a composition bias toward pro residues; the sequence is MPPPPPPPPPISPPALI. A Phosphoserine modification is found at Ser34. Low complexity predominate over residues 40-52; the sequence is PAPAAGEEGPASL. The segment covering 69–82 has biased composition (basic and acidic residues); sequence EPERSLGRLRGRFE. Residues 71–112 are a coiled coil; it reads ERSLGRLRGRFEDYDEELEEEEEMEEEEEEEEEMSHFSLRLE. The segment covering 83–103 has biased composition (acidic residues); the sequence is DYDEELEEEEEMEEEEEEEEE. A Phosphoserine modification is found at Ser118. Residues 137-176 form an RING-type zinc finger; the sequence is CSICKGYLIDATTITECLHTFCKSCIVRHFYYSNRCPKCN. Glycyl lysine isopeptide (Lys-Gly) (interchain with G-Cter in SUMO2) cross-links involve residues Lys226 and Lys237.

Component of a PRC1-like complex. Interacts with BMI1/PCGF4, RING1 and RNF2. Interacts with KDM5D. Interacts with CBX4, CBX6, CBX7 and CBX8. In terms of processing, phosphorylated during mitosis. As to expression, expressed in ovary, testis, stomach, liver, thymus and kidney (at protein level).

It is found in the nucleus. Functionally, transcriptional repressor. May modulate the levels of histone H3K4Me3 by activating KDM5D histone demethylase. Component of a Polycomb group (PcG) multiprotein PRC1-like complex, a complex class required to maintain the transcriptionally repressive state of many genes, including Hox genes, throughout development. PcG PRC1 complex acts via chromatin remodeling and modification of histones; it mediates monoubiquitination of histone H2A 'Lys-119', rendering chromatin heritably changed in its expressibility. Within the PRC1-like complex, regulates RNF2 ubiquitin ligase activity. This Mus musculus (Mouse) protein is Polycomb group RING finger protein 6 (Pcgf6).